The chain runs to 273 residues: Putative pyruvate, phosphate dikinase regulatory protein (273 aa).

Glycine 153–threonine 160 is an ADP binding site.

Belongs to the pyruvate, phosphate/water dikinase regulatory protein family. PDRP subfamily.

It catalyses the reaction N(tele)-phospho-L-histidyl/L-threonyl-[pyruvate, phosphate dikinase] + ADP = N(tele)-phospho-L-histidyl/O-phospho-L-threonyl-[pyruvate, phosphate dikinase] + AMP + H(+). It carries out the reaction N(tele)-phospho-L-histidyl/O-phospho-L-threonyl-[pyruvate, phosphate dikinase] + phosphate + H(+) = N(tele)-phospho-L-histidyl/L-threonyl-[pyruvate, phosphate dikinase] + diphosphate. Its function is as follows. Bifunctional serine/threonine kinase and phosphorylase involved in the regulation of the pyruvate, phosphate dikinase (PPDK) by catalyzing its phosphorylation/dephosphorylation. The sequence is that of Putative pyruvate, phosphate dikinase regulatory protein from Rhizobium johnstonii (strain DSM 114642 / LMG 32736 / 3841) (Rhizobium leguminosarum bv. viciae).